We begin with the raw amino-acid sequence, 155 residues long: Cytochrome c-type biogenesis protein CcmE (155 aa).

Residues 1 to 8 (MNPVRKKR) are Cytoplasmic-facing. Residues 9–29 (LFIVLAILAGVGIAVALALSA) traverse the membrane as a helical; Signal-anchor for type II membrane protein segment. The Periplasmic segment spans residues 30–155 (LQQNINLFYT…YEGGKQEYAK (126 aa)). Heme contacts are provided by His124 and Tyr128.

Belongs to the CcmE/CycJ family.

The protein resides in the cell inner membrane. Its function is as follows. Heme chaperone required for the biogenesis of c-type cytochromes. Transiently binds heme delivered by CcmC and transfers the heme to apo-cytochromes in a process facilitated by CcmF and CcmH. This is Cytochrome c-type biogenesis protein CcmE from Stutzerimonas stutzeri (strain A1501) (Pseudomonas stutzeri).